We begin with the raw amino-acid sequence, 249 residues long: Probable amino-acid import ATP-binding protein YxeO (249 aa).

An ABC transporter domain is found at 2 to 239 (ITVKNIRKAF…PKNERTKRFI (238 aa)). 34–41 (GPSGSGKS) contacts ATP.

It belongs to the ABC transporter superfamily. In terms of assembly, the complex is composed of two ATP-binding proteins (YxeO), two transmembrane proteins (YxeN) and a solute-binding protein (YxeM).

The protein resides in the cell membrane. Probably part of the ABC transporter complex YxeMNO that could be involved in amino-acid import. May transport S-methylcysteine. Responsible for energy coupling to the transport system. This Bacillus subtilis (strain 168) protein is Probable amino-acid import ATP-binding protein YxeO (yxeO).